The primary structure comprises 571 residues: MERAVRVESGVLVGVVCLLLACPATATGPEVAQPEVDTTLGRVRGRQVGVKGTDRLVNVFLGIPFAQPPLGPDRFSAPHPAQPWEGVRDASTAPPMCLQDVESMNSSRFVLNGKQQIFSVSEDCLVLNVYSPAEVPAGSGRPVMVWVHGGALITGAATSYDGSALAAYGDVVVVTVQYRLGVLGFFSTGDEHAPGNQGFLDVVAALRWVQENIAPFGGDLNCVTVFGGSAGGSIISGLVLSPVAAGLFHRAITQSGVITTPGIIDSHPWPLAQKIANTLACSSSSPAEMVQCLQQKEGEELVLSKKLKNTIYPLTVDGTVFPKSPKELLKEKPFHSVPFLMGVNNHEFSWLIPRGWGLLDTMEQMSREDMLAISTPVLTSLDVPPEMMPTVIDEYLGSNSDAQAKCQAFQEFMGDVFINVPTVSFSRYLRDSGSPVFFYEFQHRPSSFAKIKPAWVKADHGAEGAFVFGGPFLMDESSRLAFPEATEEEKQLSLTMMAQWTHFARTGDPNSKALPPWPQFNQAEQYLEINPVPRAGQKFREAWMQFWSETLPSKIQQWHQKQKNRKAQEDL.

The N-terminal stretch at 1-26 is a signal peptide; it reads MERAVRVESGVLVGVVCLLLACPATA. Cys-97 and Cys-124 are oxidised to a cystine. Residue Asn-105 is glycosylated (N-linked (GlcNAc...) asparagine). The active-site Acyl-ester intermediate is Ser-229. Cys-281 and Cys-292 are disulfide-bonded. Catalysis depends on charge relay system residues Glu-347 and His-460. The short motif at 568–571 is the Prevents secretion from ER element; that stretch reads QEDL.

This sequence belongs to the type-B carboxylesterase/lipase family. In terms of processing, N-glycosylated. As to expression, expressed in liver, colon and small intestine.

The protein resides in the endoplasmic reticulum lumen. It catalyses the reaction a carboxylic ester + H2O = an alcohol + a carboxylate + H(+). Functionally, involved in the detoxification of xenobiotics and in the activation of ester and amide prodrugs. Shows low catalytic efficiency for hydrolysis of CPT-11 (7-ethyl-10-[4-(1-piperidino)-1-piperidino]-carbonyloxycamptothecin), a prodrug for camptothecin used in cancer therapeutics. This is Carboxylesterase 3 (CES3) from Homo sapiens (Human).